Consider the following 913-residue polypeptide: Anoctamin-5 (913 aa).

Residues 1–299 (MGDPDLLEVL…DLIKNYYGEK (299 aa)) are Cytoplasmic-facing. The chain crosses the membrane as a helical span at residues 300-320 (IGIYFVFLGFYTEMLFFAAVV). Residues 321–380 (GLACFIYGLLSMEHNTSSTEICDPEIGGQMIMCPLCDQVCDYWRLNSTCLASKFSHLFDN) are Extracellular-facing. Residues N335, N366, and N380 are each glycosylated (N-linked (GlcNAc...) asparagine). Residues 381-401 (ESTVFFAIFMGIWVTLFLEFW) traverse the membrane as a helical segment. The Cytoplasmic segment spans residues 402 to 462 (KQRQARLEYE…YTRIPWYFLS (61 aa)). The helical transmembrane segment at 463-483 (GATVTLWMSLVVTSMVAVIVY) threads the bilayer. Over 484-511 (RLSVFATFASFMESDASLKQVKSFLTPQ) the chain is Extracellular. Residues 512–532 (ITTSLTGSCLNFIVILILNFF) traverse the membrane as a helical segment. The Cytoplasmic portion of the chain corresponds to 533–557 (YEKISAWITKMEIPRTYQEYESSLT). Residues 558–578 (LKMFLFQFVNFYSSCFYVAFF) form a helical membrane-spanning segment. Residues 579-679 (KGKFVGYPGK…FYEYLETVTQ (101 aa)) lie on the Extracellular side of the membrane. The helical transmembrane segment at 680 to 700 (FGFVTLFVASFPLAPLLALIN) threads the bilayer. Residues 701–732 (NIVEIRVDAWKLTTQYRRTVASKAHSIGVWQD) lie on the Cytoplasmic side of the membrane. A helical membrane pass occupies residues 733 to 753 (ILYGMAVLSVATNAFIVAFTS). The Extracellular portion of the chain corresponds to 754-834 (DIIPRLVYYY…FWHVLAAKMT (81 aa)). 3 N-linked (GlcNAc...) asparagine glycosylation sites follow: N768, N778, and N791. Residues 835–855 (FIIVMEHVVFLVKFLLAWMIP) traverse the membrane as a helical segment. The Cytoplasmic segment spans residues 856–913 (DVPKDVVERIKREKLMTIKILHDFELNKLKENLGINSNEFAKHVMIEENKAQLAKSTL).

Belongs to the anoctamin family. Highly expressed in brain, heart, kidney, lung, and skeletal muscle. Weakly expressed in bone marrow, fetal liver, placenta, spleen, thymus, osteoblasts and periodontal ligament cells.

The protein localises to the endoplasmic reticulum membrane. Its subcellular location is the cell membrane. In terms of biological role, plays a role in plasma membrane repair in a process involving annexins. Does not exhibit calcium-activated chloride channel (CaCC) activity. The polypeptide is Anoctamin-5 (ANO5) (Homo sapiens (Human)).